A 154-amino-acid polypeptide reads, in one-letter code: MPAGVGNASGSVLDMTSVRTVPSAVALVTFAGAALSGVIPAIARADPVGHQVTYTVTTTSDLMANIRYMSADPPSMAAFNADSSKYMITLHTPIAGGQPLVYTATLANPSQWAIVTASGGLRVNPEFHCEIVVDGQVVVSQDGGSGVQCSTRPW.

Residues 23 to 43 traverse the membrane as a helical segment; sequence SAVALVTFAGAALSGVIPAIA.

Its subcellular location is the membrane. This is an uncharacterized protein from Mycobacterium tuberculosis (strain CDC 1551 / Oshkosh).